A 483-amino-acid polypeptide reads, in one-letter code: Aspartyl/glutamyl-tRNA(Asn/Gln) amidotransferase subunit B (483 aa).

This sequence belongs to the GatB/GatE family. GatB subfamily. In terms of assembly, heterotrimer of A, B and C subunits.

It carries out the reaction L-glutamyl-tRNA(Gln) + L-glutamine + ATP + H2O = L-glutaminyl-tRNA(Gln) + L-glutamate + ADP + phosphate + H(+). The catalysed reaction is L-aspartyl-tRNA(Asn) + L-glutamine + ATP + H2O = L-asparaginyl-tRNA(Asn) + L-glutamate + ADP + phosphate + 2 H(+). In terms of biological role, allows the formation of correctly charged Asn-tRNA(Asn) or Gln-tRNA(Gln) through the transamidation of misacylated Asp-tRNA(Asn) or Glu-tRNA(Gln) in organisms which lack either or both of asparaginyl-tRNA or glutaminyl-tRNA synthetases. The reaction takes place in the presence of glutamine and ATP through an activated phospho-Asp-tRNA(Asn) or phospho-Glu-tRNA(Gln). This is Aspartyl/glutamyl-tRNA(Asn/Gln) amidotransferase subunit B from Rickettsia rickettsii (strain Sheila Smith).